The sequence spans 225 residues: Thymidylate kinase (225 aa).

10 to 17 (GIDGAGKS) provides a ligand contact to ATP.

It belongs to the thymidylate kinase family.

It catalyses the reaction dTMP + ATP = dTDP + ADP. In terms of biological role, phosphorylation of dTMP to form dTDP in both de novo and salvage pathways of dTTP synthesis. The chain is Thymidylate kinase from Polaromonas sp. (strain JS666 / ATCC BAA-500).